The primary structure comprises 475 residues: Fez family zinc finger protein 1 (475 aa).

Residues P28–P43 carry the Engrailed homology 1 repressor motif. 6 consecutive C2H2-type zinc fingers follow at residues F260–H282, F288–H310, H316–H338, F344–H366, F372–H394, and F400–H423. Positions S425–Q475 are disordered. Residues L427–P437 are compositionally biased toward polar residues. The span at S439–L466 shows a compositional bias: pro residues.

It belongs to the krueppel C2H2-type zinc-finger protein family.

It is found in the nucleus. Its function is as follows. Transcription repressor. Involved in the axonal projection and proper termination of olfactory sensory neurons (OSN). Plays a role in rostro-caudal patterning of the diencephalon and in prethalamic formation. Expression is required in OSN to cell-autonomously regulate OSN axon projections. Regulates non-cell-autonomously the layer formation of the olfactory bulb development and the interneurons. May be required for correct rostral migration of the interneuron progenitors. The polypeptide is Fez family zinc finger protein 1 (Fezf1) (Mus musculus (Mouse)).